The primary structure comprises 319 residues: 4-hydroxy-3-methylbut-2-enyl diphosphate reductase (319 aa).

A [4Fe-4S] cluster-binding site is contributed by Cys12. (2E)-4-hydroxy-3-methylbut-2-enyl diphosphate-binding residues include His41 and His74. His41 and His74 together coordinate dimethylallyl diphosphate. The isopentenyl diphosphate site is built by His41 and His74. Position 96 (Cys96) interacts with [4Fe-4S] cluster. His124 lines the (2E)-4-hydroxy-3-methylbut-2-enyl diphosphate pocket. Position 124 (His124) interacts with dimethylallyl diphosphate. His124 lines the isopentenyl diphosphate pocket. Glu126 acts as the Proton donor in catalysis. Thr167 serves as a coordination point for (2E)-4-hydroxy-3-methylbut-2-enyl diphosphate. Cys197 lines the [4Fe-4S] cluster pocket. Residues Ser225, Ser226, Asn227, and Ser269 each contribute to the (2E)-4-hydroxy-3-methylbut-2-enyl diphosphate site. Ser225, Ser226, Asn227, and Ser269 together coordinate dimethylallyl diphosphate. Isopentenyl diphosphate is bound by residues Ser225, Ser226, Asn227, and Ser269.

The protein belongs to the IspH family. As to quaternary structure, homodimer. Requires [4Fe-4S] cluster as cofactor.

It carries out the reaction isopentenyl diphosphate + 2 oxidized [2Fe-2S]-[ferredoxin] + H2O = (2E)-4-hydroxy-3-methylbut-2-enyl diphosphate + 2 reduced [2Fe-2S]-[ferredoxin] + 2 H(+). The catalysed reaction is dimethylallyl diphosphate + 2 oxidized [2Fe-2S]-[ferredoxin] + H2O = (2E)-4-hydroxy-3-methylbut-2-enyl diphosphate + 2 reduced [2Fe-2S]-[ferredoxin] + 2 H(+). Its pathway is isoprenoid biosynthesis; dimethylallyl diphosphate biosynthesis; dimethylallyl diphosphate from (2E)-4-hydroxy-3-methylbutenyl diphosphate: step 1/1. The protein operates within isoprenoid biosynthesis; isopentenyl diphosphate biosynthesis via DXP pathway; isopentenyl diphosphate from 1-deoxy-D-xylulose 5-phosphate: step 6/6. In terms of biological role, catalyzes the conversion of 1-hydroxy-2-methyl-2-(E)-butenyl 4-diphosphate (HMBPP) into a mixture of isopentenyl diphosphate (IPP) and dimethylallyl diphosphate (DMAPP). Acts in the terminal step of the DOXP/MEP pathway for isoprenoid precursor biosynthesis. The polypeptide is 4-hydroxy-3-methylbut-2-enyl diphosphate reductase (Buchnera aphidicola subsp. Acyrthosiphon pisum (strain Tuc7)).